The primary structure comprises 531 residues: MKRKVAVIGAGVSGLAAIRSCLEEGLEPTCFERSDDVGGLWKFSDHTEEGRASIYQSVFTNSSKEMMCFPDFPYPDDFPNFMHNSKLQEYITSFATEKNLLKYIQFETLVTRINKCPDFSTTGKWEVTTEKNSKKETAVFDAVMICSGHHVYPHLPKDSFPGLNRFKGKCFHSRDYKEPGTWKGKRVLVIGLGNSGCDIAAELSHVAQQVIISSRSGSWVMSRVWNDGYPWDMVVITRFQTFLKNNLPTAISDWWYMKQMNARFKHENYGLMPLNGTLRKEPVFNDELPARILCGTVSIKPNVKEFTETSAVFEDGTVFEGIDCVIFATGYGYAYPFLDDSIIKSRNNEVTLYKGIFPPQLEKPTMAVIGLVQSLGAAIPTTDLQARWAAQVIRGTCILPSVNDMMDDIDEKMGKKLKWFGNSTTIQTDYIVYMDELASFIGAKPNILWLFLKDPRLAIEVFFGPCSPYQFRLVGPGKWSGARNAILTQWDRSLKPMKTRVVGGIQKPCLYSHFLRLLAVPVLIALFLVLI.

FAD contacts are provided by residues 9-13 (GAGVS), glutamate 32, 40-41 (LW), and 61-62 (NS). Residues 60–61 (TN) and 195–198 (SGCD) contribute to the NADP(+) site. At serine 401 the chain carries Phosphoserine. Residues 511–531 (YSHFLRLLAVPVLIALFLVLI) traverse the membrane as a helical segment.

This sequence belongs to the FMO family. FAD serves as cofactor. As to expression, detected in liver and kidney (at protein level). Expressed in kidney and liver. Weakly expressed in lung. Does not seem to be expressed in brain, adipose tissue, or muscle.

It localises to the microsome membrane. The protein resides in the endoplasmic reticulum membrane. It carries out the reaction trimethylamine + NADPH + O2 = trimethylamine N-oxide + NADP(+) + H2O. The catalysed reaction is N,N-dimethylaniline + NADPH + O2 + H(+) = N,N-dimethylaniline N-oxide + NADP(+) + H2O. The enzyme catalyses hypotaurine + NADPH + O2 + H(+) = taurine + NADP(+) + H2O. It catalyses the reaction (S)-nicotine + NADPH + O2 = trans-(S)-nicotine N(1')-oxide + NADP(+) + H2O. It carries out the reaction albendazole + NADPH + O2 + H(+) = albendazole S-oxide + NADP(+) + H2O. Its function is as follows. Essential hepatic enzyme that catalyzes the oxygenation of a wide variety of nitrogen- and sulfur-containing compounds including drugs as well as dietary compounds. Plays an important role in the metabolism of trimethylamine (TMA), via the production of trimethylamine N-oxide (TMAO) metabolite. TMA is generated by the action of gut microbiota using dietary precursors such as choline, choline containing compounds, betaine or L-carnitine. By regulating TMAO concentration, FMO3 directly impacts both platelet responsiveness and rate of thrombus formation. The polypeptide is Flavin-containing monooxygenase 3 (Fmo3) (Rattus norvegicus (Rat)).